Reading from the N-terminus, the 186-residue chain is Potassium-transporting ATPase KdpC subunit (186 aa).

A helical transmembrane segment spans residues 9-29 (AAVVLFGGCLLVLGLLYPLAM).

This sequence belongs to the KdpC family. In terms of assembly, the system is composed of three essential subunits: KdpA, KdpB and KdpC.

Its subcellular location is the cell membrane. Its function is as follows. Part of the high-affinity ATP-driven potassium transport (or Kdp) system, which catalyzes the hydrolysis of ATP coupled with the electrogenic transport of potassium into the cytoplasm. This subunit acts as a catalytic chaperone that increases the ATP-binding affinity of the ATP-hydrolyzing subunit KdpB by the formation of a transient KdpB/KdpC/ATP ternary complex. The polypeptide is Potassium-transporting ATPase KdpC subunit (Methanosphaerula palustris (strain ATCC BAA-1556 / DSM 19958 / E1-9c)).